Reading from the N-terminus, the 196-residue chain is uncharacterized protein (196 aa).

Its subcellular location is the mitochondrion. This is an uncharacterized protein from Paramecium tetraurelia.